Consider the following 124-residue polypeptide: Large ribosomal subunit protein uL18 (124 aa).

It belongs to the universal ribosomal protein uL18 family. Part of the 50S ribosomal subunit; part of the 5S rRNA/L5/L18/L25 subcomplex. Contacts the 5S and 23S rRNAs.

In terms of biological role, this is one of the proteins that bind and probably mediate the attachment of the 5S RNA into the large ribosomal subunit, where it forms part of the central protuberance. In Orientia tsutsugamushi (strain Ikeda) (Rickettsia tsutsugamushi), this protein is Large ribosomal subunit protein uL18.